A 1049-amino-acid polypeptide reads, in one-letter code: FERM, ARHGEF and pleckstrin domain-containing protein 1 (1049 aa).

Positions Met-1–Gly-37 are disordered. Phosphoserine occurs at positions 20 and 23. Position 24 is a phosphothreonine (Thr-24). The region spanning Met-40 to Glu-320 is the FERM domain. Residues Ser-340, Ser-373, Ser-389, Ser-403, Ser-427, Ser-433, and Ser-437 each carry the phosphoserine modification. The tract at residues Phe-361–Lys-537 is disordered. Polar residues-rich tracts occupy residues Thr-371–Leu-395 and Glu-402–Ala-412. The segment covering Ser-435–Pro-448 has biased composition (low complexity). Polar residues-rich tracts occupy residues Ser-473 to Gly-492 and Val-499 to Pro-514. Phosphoserine is present on residues Ser-513 and Ser-517. One can recognise a DH domain in the interval Lys-543 to Thr-734. Residues Glu-763–Asp-860 form the PH 1 domain. 3 positions are modified to phosphoserine: Ser-837, Ser-876, and Ser-882. The tract at residues Asn-866–Ala-908 is disordered. Thr-887 bears the Phosphothreonine mark. Ser-893, Ser-900, and Ser-903 each carry phosphoserine. Residues Glu-936–Ser-1033 form the PH 2 domain.

As to quaternary structure, interacts with CADM1. Interacts with RAC1. In terms of tissue distribution, detected in forbrain (at protein level).

It is found in the cell membrane. Its subcellular location is the synapse. It localises to the synaptosome. The protein localises to the cytoplasm. The protein resides in the cytosol. It is found in the cell projection. Its subcellular location is the filopodium. It localises to the dendrite. The protein localises to the dendritic spine. Its function is as follows. May play a role in semaphorin signaling. Functions as a guanine nucleotide exchange factor for RAC1. Plays a role in the assembly and disassembly of dendritic filopodia, the formation of dendritic spines, regulation of dendrite length and ultimately the formation of synapses. This chain is FERM, ARHGEF and pleckstrin domain-containing protein 1 (Farp1), found in Rattus norvegicus (Rat).